Consider the following 123-residue polypeptide: Large ribosomal subunit protein bL12 (123 aa).

The protein belongs to the bacterial ribosomal protein bL12 family. In terms of assembly, homodimer. Part of the ribosomal stalk of the 50S ribosomal subunit. Forms a multimeric L10(L12)X complex, where L10 forms an elongated spine to which 2 to 4 L12 dimers bind in a sequential fashion. Binds GTP-bound translation factors.

In terms of biological role, forms part of the ribosomal stalk which helps the ribosome interact with GTP-bound translation factors. Is thus essential for accurate translation. This is Large ribosomal subunit protein bL12 from Bartonella henselae (strain ATCC 49882 / DSM 28221 / CCUG 30454 / Houston 1) (Rochalimaea henselae).